The sequence spans 315 residues: Homoserine kinase (315 aa).

96–106 lines the ATP pocket; it reads PHSRGLGSSAA.

Belongs to the GHMP kinase family. Homoserine kinase subfamily.

It is found in the cytoplasm. The enzyme catalyses L-homoserine + ATP = O-phospho-L-homoserine + ADP + H(+). It functions in the pathway amino-acid biosynthesis; L-threonine biosynthesis; L-threonine from L-aspartate: step 4/5. In terms of biological role, catalyzes the ATP-dependent phosphorylation of L-homoserine to L-homoserine phosphate. In Mycolicibacterium paratuberculosis (strain ATCC BAA-968 / K-10) (Mycobacterium paratuberculosis), this protein is Homoserine kinase.